We begin with the raw amino-acid sequence, 351 residues long: Dihydroorotate dehydrogenase (quinone) (351 aa).

Residues 67 to 71 (AGFDK) and Thr-91 each bind FMN. Lys-71 contributes to the substrate binding site. Substrate is bound at residue 116–120 (NAMGF). Residues Asn-145 and Asn-178 each contribute to the FMN site. Position 178 (Asn-178) interacts with substrate. Ser-181 serves as the catalytic Nucleophile. Residue Asn-183 participates in substrate binding. Residues Lys-214 and Thr-242 each contribute to the FMN site. A substrate-binding site is contributed by 243-244 (NT). Residues Gly-262, Gly-291, and 312–313 (YT) contribute to the FMN site.

Belongs to the dihydroorotate dehydrogenase family. Type 2 subfamily. Monomer. FMN serves as cofactor.

The protein resides in the cell membrane. The catalysed reaction is (S)-dihydroorotate + a quinone = orotate + a quinol. It functions in the pathway pyrimidine metabolism; UMP biosynthesis via de novo pathway; orotate from (S)-dihydroorotate (quinone route): step 1/1. In terms of biological role, catalyzes the conversion of dihydroorotate to orotate with quinone as electron acceptor. The polypeptide is Dihydroorotate dehydrogenase (quinone) (Nitratiruptor sp. (strain SB155-2)).